The primary structure comprises 206 residues: Outer-membrane lipoprotein LolB (206 aa).

An N-terminal signal peptide occupies residues Met1–Gly18. Residue Cys19 is the site of N-palmitoyl cysteine attachment. Cys19 carries S-diacylglycerol cysteine lipidation.

Belongs to the LolB family. Monomer.

It is found in the cell outer membrane. In terms of biological role, plays a critical role in the incorporation of lipoproteins in the outer membrane after they are released by the LolA protein. The protein is Outer-membrane lipoprotein LolB of Stutzerimonas stutzeri (strain A1501) (Pseudomonas stutzeri).